Reading from the N-terminus, the 363-residue chain is Chorismate synthase (363 aa).

Positions 48 and 54 each coordinate NADP(+). FMN is bound by residues 125-127, 237-238, glycine 277, 292-296, and arginine 318; these read RSS, NA, and KPTSS.

Belongs to the chorismate synthase family. As to quaternary structure, homotetramer. The cofactor is FMNH2.

The catalysed reaction is 5-O-(1-carboxyvinyl)-3-phosphoshikimate = chorismate + phosphate. Its pathway is metabolic intermediate biosynthesis; chorismate biosynthesis; chorismate from D-erythrose 4-phosphate and phosphoenolpyruvate: step 7/7. Functionally, catalyzes the anti-1,4-elimination of the C-3 phosphate and the C-6 proR hydrogen from 5-enolpyruvylshikimate-3-phosphate (EPSP) to yield chorismate, which is the branch point compound that serves as the starting substrate for the three terminal pathways of aromatic amino acid biosynthesis. This reaction introduces a second double bond into the aromatic ring system. In Pseudomonas paraeruginosa (strain DSM 24068 / PA7) (Pseudomonas aeruginosa (strain PA7)), this protein is Chorismate synthase.